Here is an 819-residue protein sequence, read N- to C-terminus: Leucine--tRNA ligase (819 aa).

A 'HIGH' region motif is present at residues 51 to 61 (PYPSGNLHIGH). The short motif at 586 to 590 (KMSKS) is the 'KMSKS' region element. Lys589 is an ATP binding site.

It belongs to the class-I aminoacyl-tRNA synthetase family.

The protein resides in the cytoplasm. It catalyses the reaction tRNA(Leu) + L-leucine + ATP = L-leucyl-tRNA(Leu) + AMP + diphosphate. This Deinococcus geothermalis (strain DSM 11300 / CIP 105573 / AG-3a) protein is Leucine--tRNA ligase.